The chain runs to 38 residues: Defensin-1 (38 aa).

Disulfide bonds link cysteine 4–cysteine 25, cysteine 11–cysteine 33, and cysteine 15–cysteine 35.

It is found in the secreted. Its function is as follows. Has antibacterial activity against the Gram-positive bacteria L.lactis and S.aureus, and against the Gram-negative bacteria E.coli D32 and V.parahemolyticus. This Crassostrea virginica (Eastern oyster) protein is Defensin-1.